A 233-amino-acid chain; its full sequence is Tetrahydromethanopterin S-methyltransferase subunit D (233 aa).

6 helical membrane-spanning segments follow: residues 4 to 24, 39 to 59, 67 to 87, 133 to 153, 166 to 186, and 209 to 229; these read LLLIGAITAGGVLIGGGVHFV, VGTGTAMLAAGAGLTGLITAA, LMIMAAGAVGSMLMIGITMLV, FVSGIIGGALGGIGGGLIYWA, MGAAGVAAIFAVGIFFINAVI, and GIVACLIASIVAGALSTLLVY.

This sequence belongs to the MtrD family. The complex is composed of 8 subunits; MtrA, MtrB, MtrC, MtrD, MtrE, MtrF, MtrG and MtrH.

Its subcellular location is the cell membrane. The catalysed reaction is 5-methyl-5,6,7,8-tetrahydromethanopterin + coenzyme M + 2 Na(+)(in) = 5,6,7,8-tetrahydromethanopterin + methyl-coenzyme M + 2 Na(+)(out). Its pathway is one-carbon metabolism; methanogenesis from CO(2); methyl-coenzyme M from 5,10-methylene-5,6,7,8-tetrahydromethanopterin: step 2/2. Its function is as follows. Part of a complex that catalyzes the formation of methyl-coenzyme M and tetrahydromethanopterin from coenzyme M and methyl-tetrahydromethanopterin. This is an energy-conserving, sodium-ion translocating step. The protein is Tetrahydromethanopterin S-methyltransferase subunit D of Methanothermobacter marburgensis (strain ATCC BAA-927 / DSM 2133 / JCM 14651 / NBRC 100331 / OCM 82 / Marburg) (Methanobacterium thermoautotrophicum).